Here is a 391-residue protein sequence, read N- to C-terminus: Phosphoglycerate kinase (391 aa).

Substrate contacts are provided by residues 21–23 (DLN), Arg36, 59–62 (HLGR), Arg113, and Arg146. ATP-binding positions include Lys197, Glu319, and 345–348 (GGDT).

This sequence belongs to the phosphoglycerate kinase family. Monomer.

The protein localises to the cytoplasm. It catalyses the reaction (2R)-3-phosphoglycerate + ATP = (2R)-3-phospho-glyceroyl phosphate + ADP. The protein operates within carbohydrate degradation; glycolysis; pyruvate from D-glyceraldehyde 3-phosphate: step 2/5. This chain is Phosphoglycerate kinase, found in Pseudoalteromonas atlantica (strain T6c / ATCC BAA-1087).